Consider the following 481-residue polypeptide: Glutamyl-tRNA(Gln) amidotransferase subunit A (481 aa).

Active-site charge relay system residues include K74 and S149. S173 serves as the catalytic Acyl-ester intermediate.

Belongs to the amidase family. GatA subfamily. Heterotrimer of A, B and C subunits.

It carries out the reaction L-glutamyl-tRNA(Gln) + L-glutamine + ATP + H2O = L-glutaminyl-tRNA(Gln) + L-glutamate + ADP + phosphate + H(+). Its function is as follows. Allows the formation of correctly charged Gln-tRNA(Gln) through the transamidation of misacylated Glu-tRNA(Gln) in organisms which lack glutaminyl-tRNA synthetase. The reaction takes place in the presence of glutamine and ATP through an activated gamma-phospho-Glu-tRNA(Gln). In Francisella philomiragia subsp. philomiragia (strain ATCC 25017 / CCUG 19701 / FSC 153 / O#319-036), this protein is Glutamyl-tRNA(Gln) amidotransferase subunit A.